The chain runs to 499 residues: Pentatricopeptide repeat-containing protein At5g61800 (499 aa).

10 PPR repeats span residues 78–113 (STFC…SVPP), 114–150 (DFHT…GLLS), 151–181 (DLFT…NPQR), 182–212 (DVVT…MPLR), 213–247 (DLVS…GLKP), 248–282 (DNVA…RLFI), 283–313 (DSFL…CSDK), 314–348 (TLFT…GIKP), 349–379 (DGVT…MRSL), and 385–419 (EMKH…GGNR). Positions 424–499 (AWSGLLGGCR…KNVGFSKVLS (76 aa)) are type E motif.

Belongs to the PPR family. PCMP-E subfamily.

In Arabidopsis thaliana (Mouse-ear cress), this protein is Pentatricopeptide repeat-containing protein At5g61800 (PCMP-E8).